The chain runs to 675 residues: Methionine--tRNA ligase (675 aa).

The 'HIGH' region motif lies at 15-25; the sequence is PYANGSIHLGH. Zn(2+) contacts are provided by C146, C149, C159, and C162. A 'KMSKS' region motif is present at residues 332-336; it reads KMSKS. Position 335 (K335) interacts with ATP. A tRNA-binding domain is found at 573–675; it reads DFAKVDMRIA…SGAQPGMQVK (103 aa).

The protein belongs to the class-I aminoacyl-tRNA synthetase family. MetG type 1 subfamily. In terms of assembly, homodimer. It depends on Zn(2+) as a cofactor.

It localises to the cytoplasm. It catalyses the reaction tRNA(Met) + L-methionine + ATP = L-methionyl-tRNA(Met) + AMP + diphosphate. In terms of biological role, is required not only for elongation of protein synthesis but also for the initiation of all mRNA translation through initiator tRNA(fMet) aminoacylation. This is Methionine--tRNA ligase from Yersinia pseudotuberculosis serotype O:3 (strain YPIII).